We begin with the raw amino-acid sequence, 96 residues long: MSSDEWSAAEDEGQLSRLLRKSRDSPFVPVGMAGFVAVLSYGLYKLNSRREQKMSLHLIHVRVAAQGCVVGAVTLGVLYSMYKDYIRPRFFNVPKK.

The Cytoplasmic segment spans residues Met1–Pro26. Residues Met1–Phe91 form the HIG1 domain. The chain crosses the membrane as a helical span at residues Phe27 to Tyr44. Residues Lys45–Leu58 lie on the Extracellular side of the membrane. The helical transmembrane segment at Ile59–Met81 threads the bilayer. The Cytoplasmic portion of the chain corresponds to Tyr82 to Lys96.

It localises to the membrane. This chain is HIG1 domain family member 1C (Higd1c), found in Mus musculus (Mouse).